Consider the following 672-residue polypeptide: Glycerophosphocholine phosphodiesterase GPCPD1 (672 aa).

Residues 1–113 (MTPSQVTFEI…IIIDDGQFGI (113 aa)) form the CBM20 domain. Substrate-binding positions include R68 and 86 to 87 (HK). Residue S175 is modified to Phosphoserine. In terms of domain architecture, GP-PDE spans 318 to 618 (PLDVGHRGAG…DRIYDWMPEQ (301 aa)). Y608 carries the phosphotyrosine modification.

The protein belongs to the glycerophosphoryl diester phosphodiesterase family.

Its subcellular location is the cytoplasm. It is found in the cytosol. The catalysed reaction is sn-glycerol 3-phosphocholine + H2O = sn-glycerol 3-phosphate + choline + H(+). Its function is as follows. May be involved in the negative regulation of skeletal muscle differentiation, independently of its glycerophosphocholine phosphodiesterase activity. This chain is Glycerophosphocholine phosphodiesterase GPCPD1 (Gpcpd1), found in Rattus norvegicus (Rat).